A 479-amino-acid polypeptide reads, in one-letter code: Aspartyl/glutamyl-tRNA(Asn/Gln) amidotransferase subunit B (479 aa).

Belongs to the GatB/GatE family. GatB subfamily. As to quaternary structure, heterotrimer of A, B and C subunits.

It carries out the reaction L-glutamyl-tRNA(Gln) + L-glutamine + ATP + H2O = L-glutaminyl-tRNA(Gln) + L-glutamate + ADP + phosphate + H(+). It catalyses the reaction L-aspartyl-tRNA(Asn) + L-glutamine + ATP + H2O = L-asparaginyl-tRNA(Asn) + L-glutamate + ADP + phosphate + 2 H(+). Its function is as follows. Allows the formation of correctly charged Asn-tRNA(Asn) or Gln-tRNA(Gln) through the transamidation of misacylated Asp-tRNA(Asn) or Glu-tRNA(Gln) in organisms which lack either or both of asparaginyl-tRNA or glutaminyl-tRNA synthetases. The reaction takes place in the presence of glutamine and ATP through an activated phospho-Asp-tRNA(Asn) or phospho-Glu-tRNA(Gln). The protein is Aspartyl/glutamyl-tRNA(Asn/Gln) amidotransferase subunit B of Streptococcus pyogenes serotype M6 (strain ATCC BAA-946 / MGAS10394).